Here is a 142-residue protein sequence, read N- to C-terminus: Hemoglobin subunit alpha (142 aa).

Residues 2 to 142 form the Globin domain; it reads VLSPADKTNI…VSTVLTSKYR (141 aa). Serine 4 bears the Phosphoserine mark. Lysine 8 carries the N6-succinyllysine modification. Threonine 9 is subject to Phosphothreonine. Position 12 is an N6-succinyllysine (lysine 12). Lysine 17 bears the N6-acetyllysine; alternate mark. Lysine 17 carries the N6-succinyllysine; alternate modification. Tyrosine 25 is subject to Phosphotyrosine. Serine 36 carries the post-translational modification Phosphoserine. Lysine 41 carries the post-translational modification N6-succinyllysine. Serine 50 bears the Phosphoserine mark. Position 59 (histidine 59) interacts with O2. Histidine 88 contributes to the heme b binding site. Residue serine 103 is modified to Phosphoserine. Threonine 109 carries the post-translational modification Phosphothreonine. The residue at position 125 (serine 125) is a Phosphoserine. Residues threonine 135 and threonine 138 each carry the phosphothreonine modification. Serine 139 is modified (phosphoserine).

It belongs to the globin family. In terms of assembly, heterotetramer of two alpha chains and two beta chains. In terms of tissue distribution, red blood cells.

Its function is as follows. Involved in oxygen transport from the lung to the various peripheral tissues. Hemopressin acts as an antagonist peptide of the cannabinoid receptor CNR1. Hemopressin-binding efficiently blocks cannabinoid receptor CNR1 and subsequent signaling. The polypeptide is Hemoglobin subunit alpha (HBA) (Canis latrans (Coyote)).